The sequence spans 761 residues: Xaa-Pro dipeptidyl-peptidase (761 aa).

Active-site charge relay system residues include Ser349, Asp469, and His499.

The protein belongs to the peptidase S15 family. In terms of assembly, homodimer.

The protein localises to the cytoplasm. The enzyme catalyses Hydrolyzes Xaa-Pro-|- bonds to release unblocked, N-terminal dipeptides from substrates including Ala-Pro-|-p-nitroanilide and (sequentially) Tyr-Pro-|-Phe-Pro-|-Gly-Pro-|-Ile.. Removes N-terminal dipeptides sequentially from polypeptides having unsubstituted N-termini provided that the penultimate residue is proline. In Streptococcus equi subsp. equi (strain 4047), this protein is Xaa-Pro dipeptidyl-peptidase.